The chain runs to 117 residues: MNPIRRRKIEAEAVRTVAMMILSGKVKDPRVHMVSVHRAEISEDGKNMKVFVTAICTDKKKIKVLSGLNSASGLFQATLSGKLGLRITPKMHFLWDEEYIQSLDESLRLTRKPTNTD.

It belongs to the RbfA family. Monomer. Binds 30S ribosomal subunits, but not 50S ribosomal subunits or 70S ribosomes.

It is found in the cytoplasm. Functionally, one of several proteins that assist in the late maturation steps of the functional core of the 30S ribosomal subunit. Associates with free 30S ribosomal subunits (but not with 30S subunits that are part of 70S ribosomes or polysomes). Required for efficient processing of 16S rRNA. May interact with the 5'-terminal helix region of 16S rRNA. In Leptospira interrogans serogroup Icterohaemorrhagiae serovar copenhageni (strain Fiocruz L1-130), this protein is Ribosome-binding factor A.